The following is an 80-amino-acid chain: Ataxin-8 (80 aa).

In terms of tissue distribution, specifically found in brains from SCA8 patients (at protein level).

It localises to the nucleus. The chain is Ataxin-8 (ATXN8) from Homo sapiens (Human).